We begin with the raw amino-acid sequence, 366 residues long: Ferredoxin--NADP reductase (366 aa).

Residues D51, Q59, Y64, V104, F139, D308, and T349 each coordinate FAD.

Belongs to the ferredoxin--NADP reductase type 2 family. In terms of assembly, homodimer. Requires FAD as cofactor.

The catalysed reaction is 2 reduced [2Fe-2S]-[ferredoxin] + NADP(+) + H(+) = 2 oxidized [2Fe-2S]-[ferredoxin] + NADPH. This Polaromonas naphthalenivorans (strain CJ2) protein is Ferredoxin--NADP reductase.